The primary structure comprises 462 residues: Glutamate--tRNA ligase 1 (462 aa).

The 'HIGH' region motif lies at 8–18 (PSPTGYLHIGG). The 'KMSKS' region motif lies at 237 to 241 (KLSKR). Lys-240 serves as a coordination point for ATP.

Belongs to the class-I aminoacyl-tRNA synthetase family. Glutamate--tRNA ligase type 1 subfamily. As to quaternary structure, monomer.

The protein resides in the cytoplasm. The enzyme catalyses tRNA(Glu) + L-glutamate + ATP = L-glutamyl-tRNA(Glu) + AMP + diphosphate. Its function is as follows. Catalyzes the attachment of glutamate to tRNA(Glu) in a two-step reaction: glutamate is first activated by ATP to form Glu-AMP and then transferred to the acceptor end of tRNA(Glu). In Sulfurimonas denitrificans (strain ATCC 33889 / DSM 1251) (Thiomicrospira denitrificans (strain ATCC 33889 / DSM 1251)), this protein is Glutamate--tRNA ligase 1.